The following is an 802-amino-acid chain: Penicillin G acylase (802 aa).

The N-terminal stretch at 1–24 is a signal peptide; sequence MKTKWLISVIILFVFIFPQNLVFA. Glutamate 177 contributes to the Ca(2+) binding site. The propeptide at 235–265 is spacer peptide; sequence SAVIKASEKVGKERENFVQTSEELGLPLKIG. The active-site Nucleophile is the serine 266. Aspartate 341 lines the Ca(2+) pocket.

This sequence belongs to the peptidase S45 family. Heterodimer of an alpha subunit and a beta subunit processed from the same precursor. The cofactor is Ca(2+).

The protein resides in the secreted. The catalysed reaction is a penicillin + H2O = 6-aminopenicillanate + a carboxylate. The sequence is that of Penicillin G acylase (pac) from Priestia megaterium (Bacillus megaterium).